Here is a 39-residue protein sequence, read N- to C-terminus: Cytochrome b559 subunit beta (39 aa).

Residues 14-30 (WLAVHGLAVPTVFFLGS) traverse the membrane as a helical segment. Histidine 18 contacts heme.

The protein belongs to the PsbE/PsbF family. As to quaternary structure, heterodimer of an alpha subunit and a beta subunit. PSII is composed of 1 copy each of membrane proteins PsbA, PsbB, PsbC, PsbD, PsbE, PsbF, PsbH, PsbI, PsbJ, PsbK, PsbL, PsbM, PsbT, PsbX, PsbY, PsbZ, Psb30/Ycf12, at least 3 peripheral proteins of the oxygen-evolving complex and a large number of cofactors. It forms dimeric complexes. It depends on heme b as a cofactor.

It localises to the plastid. The protein localises to the chloroplast thylakoid membrane. Its function is as follows. This b-type cytochrome is tightly associated with the reaction center of photosystem II (PSII). PSII is a light-driven water:plastoquinone oxidoreductase that uses light energy to abstract electrons from H(2)O, generating O(2) and a proton gradient subsequently used for ATP formation. It consists of a core antenna complex that captures photons, and an electron transfer chain that converts photonic excitation into a charge separation. The chain is Cytochrome b559 subunit beta from Gnetum gnemon (Spanish joint-fir).